We begin with the raw amino-acid sequence, 111 residues long: Glucosamine 6-phosphate N-acetyltransferase (111 aa).

One can recognise an N-acetyltransferase domain in the interval 1 to 111; the sequence is MKKDFHSTYY…MKKYASHSII (111 aa). Substrate contacts are provided by residues 33 to 36 and 45 to 47; these read KFLR and EEV. Residues 47 to 49 and 55 to 60 contribute to the acetyl-CoA site; these read VIV and RKAIGK. Substrate-binding positions include 76–77 and aspartate 81; that span reads YK. 90–92 contributes to the acetyl-CoA binding site; the sequence is YEK.

Belongs to the acetyltransferase family. GNA1 subfamily.

The enzyme catalyses D-glucosamine 6-phosphate + acetyl-CoA = N-acetyl-D-glucosamine 6-phosphate + CoA + H(+). It functions in the pathway nucleotide-sugar biosynthesis; UDP-N-acetyl-alpha-D-glucosamine biosynthesis; N-acetyl-alpha-D-glucosamine 1-phosphate from alpha-D-glucosamine 6-phosphate (route I): step 1/2. The sequence is that of Glucosamine 6-phosphate N-acetyltransferase (gna1) from Schizosaccharomyces pombe (strain 972 / ATCC 24843) (Fission yeast).